Here is a 328-residue protein sequence, read N- to C-terminus: NADH-cytochrome b5 reductase-like protein (328 aa).

Residues 76-184 form the FAD-binding FR-type domain; sequence DKWLEFKLQD…KGPVEKFKYS (109 aa). Position 201 is a phosphothreonine (T201).

This sequence belongs to the flavoprotein pyridine nucleotide cytochrome reductase family. Requires FAD as cofactor.

It is found in the mitochondrion. It carries out the reaction 2 Fe(III)-[cytochrome b5] + NADH = 2 Fe(II)-[cytochrome b5] + NAD(+) + H(+). Desaturation and elongation of fatty acids. In Arabidopsis thaliana (Mouse-ear cress), this protein is NADH-cytochrome b5 reductase-like protein (CBR2).